We begin with the raw amino-acid sequence, 655 residues long: Alpha-amylase (655 aa).

Residue glutamate 123 is the Nucleophile of the active site. The active-site Proton donor is the aspartate 214.

It belongs to the glycosyl hydrolase 57 family.

The enzyme catalyses Endohydrolysis of (1-&gt;4)-alpha-D-glucosidic linkages in polysaccharides containing three or more (1-&gt;4)-alpha-linked D-glucose units.. The polypeptide is Alpha-amylase (amyA) (Pyrococcus abyssi (strain GE5 / Orsay)).